A 378-amino-acid polypeptide reads, in one-letter code: Succinyl-diaminopimelate desuccinylase (378 aa).

Zn(2+) is bound at residue His-67. Asp-69 is an active-site residue. A Zn(2+)-binding site is contributed by Asp-100. The active-site Proton acceptor is the Glu-134. 3 residues coordinate Zn(2+): Glu-135, Glu-163, and His-349.

The protein belongs to the peptidase M20A family. DapE subfamily. In terms of assembly, homodimer. Zn(2+) serves as cofactor. Co(2+) is required as a cofactor.

It catalyses the reaction N-succinyl-(2S,6S)-2,6-diaminopimelate + H2O = (2S,6S)-2,6-diaminopimelate + succinate. Its pathway is amino-acid biosynthesis; L-lysine biosynthesis via DAP pathway; LL-2,6-diaminopimelate from (S)-tetrahydrodipicolinate (succinylase route): step 3/3. Functionally, catalyzes the hydrolysis of N-succinyl-L,L-diaminopimelic acid (SDAP), forming succinate and LL-2,6-diaminopimelate (DAP), an intermediate involved in the bacterial biosynthesis of lysine and meso-diaminopimelic acid, an essential component of bacterial cell walls. This is Succinyl-diaminopimelate desuccinylase from Pasteurella multocida (strain Pm70).